The sequence spans 340 residues: ATPase get3 (340 aa).

Lysine 34–threonine 41 lines the ATP pocket. Aspartate 63 is a catalytic residue. Residues glutamate 245 and asparagine 272 each coordinate ATP. 2 residues coordinate Zn(2+): cysteine 283 and cysteine 286.

The protein belongs to the arsA ATPase family. In terms of assembly, homodimer.

The protein localises to the cytoplasm. Its subcellular location is the endoplasmic reticulum. ATPase required for the post-translational delivery of tail-anchored (TA) proteins to the endoplasmic reticulum. Recognizes and selectively binds the transmembrane domain of TA proteins in the cytosol. This complex then targets to the endoplasmic reticulum by membrane-bound receptors, where the tail-anchored protein is released for insertion. This process is regulated by ATP binding and hydrolysis. ATP binding drives the homodimer towards the closed dimer state, facilitating recognition of newly synthesized TA membrane proteins. ATP hydrolysis is required for insertion. Subsequently, the homodimer reverts towards the open dimer state, lowering its affinity for the membrane-bound receptor, and returning it to the cytosol to initiate a new round of targeting. This is ATPase get3 (get3) from Emericella nidulans (strain FGSC A4 / ATCC 38163 / CBS 112.46 / NRRL 194 / M139) (Aspergillus nidulans).